Here is a 544-residue protein sequence, read N- to C-terminus: Chaperonin GroEL (544 aa).

Residues 30–33, Lys-51, 87–91, Gly-415, and Asp-495 each bind ATP; these read TLGP and DGTTT.

It belongs to the chaperonin (HSP60) family. As to quaternary structure, forms a cylinder of 14 subunits composed of two heptameric rings stacked back-to-back. Interacts with the co-chaperonin GroES.

The protein resides in the cytoplasm. The catalysed reaction is ATP + H2O + a folded polypeptide = ADP + phosphate + an unfolded polypeptide.. Functionally, together with its co-chaperonin GroES, plays an essential role in assisting protein folding. The GroEL-GroES system forms a nano-cage that allows encapsulation of the non-native substrate proteins and provides a physical environment optimized to promote and accelerate protein folding. This Neisseria meningitidis serogroup C (strain 053442) protein is Chaperonin GroEL.